A 348-amino-acid polypeptide reads, in one-letter code: GDSL esterase/lipase At4g30140 (348 aa).

Residues 1-28 form the signal peptide; the sequence is MVEGESKALWIILATVFAVAAVAPAVHG. Ser40 serves as the catalytic Nucleophile. Active-site residues include Asp316 and His319. A glycan (N-linked (GlcNAc...) asparagine) is linked at Asn342.

The protein belongs to the 'GDSL' lipolytic enzyme family.

The protein resides in the secreted. This chain is GDSL esterase/lipase At4g30140, found in Arabidopsis thaliana (Mouse-ear cress).